Reading from the N-terminus, the 102-residue chain is Small ribosomal subunit protein uS10 (102 aa).

Belongs to the universal ribosomal protein uS10 family. As to quaternary structure, part of the 30S ribosomal subunit.

Involved in the binding of tRNA to the ribosomes. The polypeptide is Small ribosomal subunit protein uS10 (Thiobacillus denitrificans (strain ATCC 25259 / T1)).